A 331-amino-acid polypeptide reads, in one-letter code: Photosystem II assembly lipoprotein Ycf48 (331 aa).

The first 23 residues, 1-23, serve as a signal peptide directing secretion; sequence MIPVIRSFLSLLLCVGLTFGLGG. Cysteine 24 carries N-palmitoyl cysteine lipidation. Residue cysteine 24 is the site of S-diacylglycerol cysteine attachment.

The protein belongs to the Ycf48 family. As to quaternary structure, part of early PSII assembly complexes which includes D1 (psbA) and PsbI; not found in mature PSII. Binds to the lumenal side of PSII complexes. Interacts with YidC.

The protein resides in the cellular thylakoid membrane. Functionally, a factor required for optimal assembly of photosystem II (PSII), acting in the early stages of PSII assembly. Also plays a role in replacement of photodamaged D1 (psbA). Assists YidC in synthesis of chlorophyll-binding proteins. This chain is Photosystem II assembly lipoprotein Ycf48, found in Synechococcus sp. (strain RCC307).